The chain runs to 277 residues: Deoxyguanosine kinase, mitochondrial (277 aa).

Residues 1–39 (MAAGRFLLRRLRASFRSPLRNALVDAPHARAMHDGGGPR) constitute a mitochondrion transit peptide. 45–53 (GNIAVGKST) provides a ligand contact to ATP. Substrate is bound by residues E70, Y100, Q111, and R118. The active-site Proton acceptor is E141. 2 residues coordinate substrate: R142 and D147. 206–208 (RDR) contributes to the ATP binding site. Residue E211 coordinates substrate. 254–256 (EDF) serves as a coordination point for ATP.

It belongs to the DCK/DGK family. Homodimer. Spleen and thymus. Expressed at much lower levels in the brain and liver.

It is found in the mitochondrion. It localises to the cytoplasm. It carries out the reaction 2'-deoxyguanosine + ATP = dGMP + ADP + H(+). The enzyme catalyses 2'-deoxyadenosine + ATP = dAMP + ADP + H(+). Functionally, phosphorylates deoxyguanosine and deoxyadenosine in the mitochondrial matrix, with the highest efficiency for deoxyguanosine. In non-replicating cells, where cytosolic dNTP synthesis is down-regulated, mtDNA synthesis depends solely on DGUOK and TK2. Phosphorylates certain nucleoside analogs. Widely used as target of antiviral and chemotherapeutic agents. This Mus musculus (Mouse) protein is Deoxyguanosine kinase, mitochondrial (Dguok).